The following is a 328-amino-acid chain: Endo-beta-1,4-glucanase B (328 aa).

The N-terminal stretch at 1–17 (MKVNTLLVAVAAGTAMA) is a signal peptide. An N-linked (GlcNAc...) asparagine glycan is attached at Asn-95. Glu-155 acts as the Proton donor in catalysis. The active-site Nucleophile is the Glu-262.

The protein belongs to the glycosyl hydrolase 5 (cellulase A) family.

It is found in the secreted. The catalysed reaction is Endohydrolysis of (1-&gt;4)-beta-D-glucosidic linkages in cellulose, lichenin and cereal beta-D-glucans.. In terms of biological role, has endoglucanase activity on substrates containing beta-1,4 glycosidic bonds, like in carboxymethylcellulose (CMC), hydroxyethylcellulose (HEC) and beta-glucan. Involved in the degradation of complex natural cellulosic substrates. This chain is Endo-beta-1,4-glucanase B (eglB), found in Emericella nidulans (strain FGSC A4 / ATCC 38163 / CBS 112.46 / NRRL 194 / M139) (Aspergillus nidulans).